A 376-amino-acid chain; its full sequence is MKKIILVAGGTGGHFFPAVALGEELIKRGYEVHFITDLRCKQYIKQDMKVIFHILDLKRSGNIFLFLPRLSIAVLKAIKLLYNMKPSVTVGFGGYPVIAPMFAAIFLRVPIIIHEQNSYLGKVNKFFASFAKKIAISYEKIKNLPEFAKSKIVVTGGVVRENIRELKVIEMSSRGLTTGSKKSLIKALDSVVKPRHDKLFTIFIFGGSQGAKLFSELIPASIQILMQKQPSLELNIIQQAALDDQVKIKDIYSKLNITYEVAEFFDNMALQYKEADLVISRAGASTIEELTYIGLPAIFIPLPSAADNHQYYNAQLLADEKTGWCLEQNNISAGKLADKILDLISNPKILEDASQNLLKRRKEGHKLLSNLIEEVI.

Residues 11-13 (TGG), Asn-117, Arg-160, Ser-208, and Gln-310 each bind UDP-N-acetyl-alpha-D-glucosamine.

The protein belongs to the glycosyltransferase 28 family. MurG subfamily.

The protein resides in the cell inner membrane. It catalyses the reaction di-trans,octa-cis-undecaprenyl diphospho-N-acetyl-alpha-D-muramoyl-L-alanyl-D-glutamyl-meso-2,6-diaminopimeloyl-D-alanyl-D-alanine + UDP-N-acetyl-alpha-D-glucosamine = di-trans,octa-cis-undecaprenyl diphospho-[N-acetyl-alpha-D-glucosaminyl-(1-&gt;4)]-N-acetyl-alpha-D-muramoyl-L-alanyl-D-glutamyl-meso-2,6-diaminopimeloyl-D-alanyl-D-alanine + UDP + H(+). Its pathway is cell wall biogenesis; peptidoglycan biosynthesis. In terms of biological role, cell wall formation. Catalyzes the transfer of a GlcNAc subunit on undecaprenyl-pyrophosphoryl-MurNAc-pentapeptide (lipid intermediate I) to form undecaprenyl-pyrophosphoryl-MurNAc-(pentapeptide)GlcNAc (lipid intermediate II). This chain is UDP-N-acetylglucosamine--N-acetylmuramyl-(pentapeptide) pyrophosphoryl-undecaprenol N-acetylglucosamine transferase, found in Rickettsia rickettsii (strain Iowa).